The chain runs to 575 residues: MVTKLEQLIAQTILQGFDAQYGRFLEVTAGAQHRFEQADWHAVQQAMKKRIHLYDSHVGLVVEQLKHITDQRCFDVNFLTRVKEIYTGLLPDYPRFEIAESFFNSVYCRLFKHRDLTPDKLFVFSSQPERRFREIPRPLARDFAPKGDLSGMLQVVLNDLPLRLPWENLPRDIGYIATALRQNFTDEQLATARFQVANELFYRNKAAWLVGKLRLADEVYPFLLPIHHNESGGLFIDTCLTSKAEASIVFGFARSYFMVYAPLPAAMVEWLREILPGKSTAELYMAIGCQKHGKTESYREYLTFVHQSSEQFIIAPGVKGMVMLVFTLPSFDRVFKVIKDQFAPQKEVSQTRVLECYQLVKEHDRVGRMADTQEYENFVIDKHRISAELLTELQREVPEKLEDLGDQIIIKHLYMERRMTPLNLYIEQANDQQLKDAIEEYGNAIKQLAAANIFPGDMLFKNFGVTRHGRVVFYDYDEICYMTEVNFRDIPPPRYPEDEMASEPWYSVSPNDVFPEEFRHFLCTDLKVRHFFEEMHSDLFHASYWRGLQQRIKDGHVEDVFAYRRKQRFSQRVIS.

ATP is bound by residues 315 to 321 (APGVKGM) and Lys-336. The active site involves Asp-371.

The protein belongs to the AceK family.

Its subcellular location is the cytoplasm. The catalysed reaction is L-seryl-[isocitrate dehydrogenase] + ATP = O-phospho-L-seryl-[isocitrate dehydrogenase] + ADP + H(+). Functionally, bifunctional enzyme which can phosphorylate or dephosphorylate isocitrate dehydrogenase (IDH) on a specific serine residue. This is a regulatory mechanism which enables bacteria to bypass the Krebs cycle via the glyoxylate shunt in response to the source of carbon. When bacteria are grown on glucose, IDH is fully active and unphosphorylated, but when grown on acetate or ethanol, the activity of IDH declines drastically concomitant with its phosphorylation. This is Isocitrate dehydrogenase kinase/phosphatase from Yersinia enterocolitica serotype O:8 / biotype 1B (strain NCTC 13174 / 8081).